Consider the following 410-residue polypeptide: Imidazolonepropionase (410 aa).

Positions 73 and 75 each coordinate Fe(3+). H73 and H75 together coordinate Zn(2+). 4-imidazolone-5-propanoate is bound by residues R82, Y145, and H178. Residue Y145 coordinates N-formimidoyl-L-glutamate. H243 provides a ligand contact to Fe(3+). A Zn(2+)-binding site is contributed by H243. Q246 is a 4-imidazolone-5-propanoate binding site. D318 contributes to the Fe(3+) binding site. D318 provides a ligand contact to Zn(2+). N-formimidoyl-L-glutamate-binding residues include N320 and G322. S323 contributes to the 4-imidazolone-5-propanoate binding site.

This sequence belongs to the metallo-dependent hydrolases superfamily. HutI family. It depends on Zn(2+) as a cofactor. The cofactor is Fe(3+).

It localises to the cytoplasm. It carries out the reaction 4-imidazolone-5-propanoate + H2O = N-formimidoyl-L-glutamate. The protein operates within amino-acid degradation; L-histidine degradation into L-glutamate; N-formimidoyl-L-glutamate from L-histidine: step 3/3. In terms of biological role, catalyzes the hydrolytic cleavage of the carbon-nitrogen bond in imidazolone-5-propanoate to yield N-formimidoyl-L-glutamate. It is the third step in the universal histidine degradation pathway. The chain is Imidazolonepropionase from Shewanella baltica (strain OS223).